The following is a 418-amino-acid chain: Serine hydroxymethyltransferase (418 aa).

(6S)-5,6,7,8-tetrahydrofolate-binding positions include Leu121 and 125–127 (GHL). Lys230 carries the N6-(pyridoxal phosphate)lysine modification. 355 to 357 (SPF) provides a ligand contact to (6S)-5,6,7,8-tetrahydrofolate.

This sequence belongs to the SHMT family. As to quaternary structure, homodimer. The cofactor is pyridoxal 5'-phosphate.

Its subcellular location is the cytoplasm. It catalyses the reaction (6R)-5,10-methylene-5,6,7,8-tetrahydrofolate + glycine + H2O = (6S)-5,6,7,8-tetrahydrofolate + L-serine. It participates in one-carbon metabolism; tetrahydrofolate interconversion. The protein operates within amino-acid biosynthesis; glycine biosynthesis; glycine from L-serine: step 1/1. In terms of biological role, catalyzes the reversible interconversion of serine and glycine with tetrahydrofolate (THF) serving as the one-carbon carrier. This reaction serves as the major source of one-carbon groups required for the biosynthesis of purines, thymidylate, methionine, and other important biomolecules. Also exhibits THF-independent aldolase activity toward beta-hydroxyamino acids, producing glycine and aldehydes, via a retro-aldol mechanism. This Streptococcus pneumoniae (strain P1031) protein is Serine hydroxymethyltransferase.